Reading from the N-terminus, the 215-residue chain is Protein Nef (215 aa).

Gly2 carries the N-myristoyl glycine; by host lipid modification. Ser6 carries the phosphoserine; by host modification. Positions 71-74 are acidic; interacts with host PACS1 and PACS2; stabilizes the interaction of NEF/MHC-I with host AP1M1; necessary for MHC-I internalization; the sequence is EEEE. Positions 78–87 are SH3-binding; interaction with Src family tyrosine kinases; that stretch reads PVRPQVPLRP. Positions 81-84 match the PxxP; stabilizes the interaction of NEF/MHC-I with host AP1M1; necessary for MHC-I internalization motif; it reads PQVP. The segment at 117–133 is mediates dimerization, Nef-PTE1 interaction; sequence EILDLWVYHTQGFFPDW. Residues 157 to 189 form a binding to ATP6V1H region; that stretch reads VDPAEVEETTEGEDNCLLHPINQHGMEDEHREI. The short motif at 173–174 is the Dileucine internalization motif; necessary for CD4 internalization element; that stretch reads LL. Positions 183-184 match the Diacidic; necessary for CD4 internalization motif; the sequence is ED.

Belongs to the lentivirus primate group Nef protein family. As to quaternary structure, monomer; cytosolic form. Homodimer; membrane bound form. Interacts with Nef associated p21-activated kinase (PAK2); this interaction activates PAK2. Associates with the Nef-MHC-I-AP1 complex; this complex is required for MHC-I internalization. Interacts (via C-terminus) with host PI3-kinase. Interacts with host PACS1; this interaction seems to be weak. Interacts with host PACS2. Interacts with host LCK and MAPK3; these interactions inhibit the kinase activity of the latter. Interacts with host ATP6V1H; this interaction may play a role in CD4 endocytosis. Associates with the CD4-Nef-AP2 complex; this complex is required for CD4 internalization. Interacts with host AP2 subunit alpha and AP2 subunit sigma2. Interacts with TCR-zeta chain; this interaction up-regulates the Fas ligand (FasL) surface expression. Interacts with host HCK, LYN, and SRC; these interactions activate the Src family kinases. Interacts with MAP3K5; this interaction inhibits the Fas and TNFR-mediated death signals. Interacts with beta-COP and PTE1. Interacts with human RACK1; this increases Nef phosphorylation by PKC. Interacts with TP53; this interaction decreases the half-life of TP53, protecting the infected cell against p53-mediated apoptosis. The virion-associated Nef proteins are cleaved by the viral protease to release the soluble C-terminal core protein. Nef is probably cleaved concomitantly with viral structural proteins on maturation of virus particles. Post-translationally, myristoylated. In terms of processing, phosphorylated on serine residues, probably by host PKCdelta and theta.

Its subcellular location is the host cell membrane. It is found in the virion. The protein localises to the secreted. The protein resides in the host Golgi apparatus membrane. Factor of infectivity and pathogenicity, required for optimal virus replication. Alters numerous pathways of T-lymphocyte function and down-regulates immunity surface molecules in order to evade host defense and increase viral infectivity. Alters the functionality of other immunity cells, like dendritic cells, monocytes/macrophages and NK cells. Its function is as follows. In infected CD4(+) T-lymphocytes, down-regulates the surface MHC-I, mature MHC-II, CD4, CD28, CCR5 and CXCR4 molecules. Mediates internalization and degradation of host CD4 through the interaction of with the cytoplasmic tail of CD4, the recruitment of AP-2 (clathrin adapter protein complex 2), internalization through clathrin coated pits, and subsequent transport to endosomes and lysosomes for degradation. Diverts host MHC-I molecules to the trans-Golgi network-associated endosomal compartments by an endocytic pathway to finally target them for degradation. MHC-I down-regulation may involve AP-1 (clathrin adapter protein complex 1) or possibly Src family kinase-ZAP70/Syk-PI3K cascade recruited by PACS2. In consequence infected cells are masked for immune recognition by cytotoxic T-lymphocytes. Decreasing the number of immune receptors also prevents reinfection by more HIV particles (superinfection). Down-regulates host SERINC3 and SERINC5 thereby excluding these proteins from the viral particles. Virion infectivity is drastically higher when SERINC3 or SERINC5 are excluded from the viral envelope, because these host antiviral proteins impair the membrane fusion event necessary for subsequent virion penetration. Functionally, bypasses host T-cell signaling by inducing a transcriptional program nearly identical to that of anti-CD3 cell activation. Interaction with TCR-zeta chain up-regulates the Fas ligand (FasL). Increasing surface FasL molecules and decreasing surface MHC-I molecules on infected CD4(+) cells send attacking cytotoxic CD8+ T-lymphocytes into apoptosis. In terms of biological role, plays a role in optimizing the host cell environment for viral replication without causing cell death by apoptosis. Protects the infected cells from apoptosis in order to keep them alive until the next virus generation is ready to strike. Inhibits the Fas and TNFR-mediated death signals by blocking MAP3K5/ASK1. Decreases the half-life of TP53, protecting the infected cell against p53-mediated apoptosis. Inhibits the apoptotic signals regulated by the Bcl-2 family proteins through the formation of a Nef/PI3-kinase/PAK2 complex that leads to activation of PAK2 and induces phosphorylation of host BAD. Extracellular Nef protein targets CD4(+) T-lymphocytes for apoptosis by interacting with CXCR4 surface receptors. The chain is Protein Nef from Human immunodeficiency virus type 1 group M subtype K (isolate 96CM-MP535) (HIV-1).